The sequence spans 342 residues: Nicotinate-nucleotide--dimethylbenzimidazole phosphoribosyltransferase (342 aa).

The active-site Proton acceptor is the Glu311.

Belongs to the CobT family.

It catalyses the reaction 5,6-dimethylbenzimidazole + nicotinate beta-D-ribonucleotide = alpha-ribazole 5'-phosphate + nicotinate + H(+). The protein operates within nucleoside biosynthesis; alpha-ribazole biosynthesis; alpha-ribazole from 5,6-dimethylbenzimidazole: step 1/2. Catalyzes the synthesis of alpha-ribazole-5'-phosphate from nicotinate mononucleotide (NAMN) and 5,6-dimethylbenzimidazole (DMB). The polypeptide is Nicotinate-nucleotide--dimethylbenzimidazole phosphoribosyltransferase (Shewanella loihica (strain ATCC BAA-1088 / PV-4)).